Reading from the N-terminus, the 148-residue chain is MKLDLKILDARMRDYMPAYATTGSAGLDLRACLDAPVTLQPGETTLVPTGLAIHLADPGYAALILPRSGLGHKHGIVLGNLVGLIDSDYQGQLMVSTWNRGQTEFVLNPFERLAQLVIVPVVQAQFNIVDDFAQSERGEGGFGSTGRH.

Substrate is bound by residues 67–69 (RSG), asparagine 80, 84–86 (LID), and methionine 94.

The protein belongs to the dUTPase family. Requires Mg(2+) as cofactor.

The catalysed reaction is dUTP + H2O = dUMP + diphosphate + H(+). It functions in the pathway pyrimidine metabolism; dUMP biosynthesis; dUMP from dCTP (dUTP route): step 2/2. In terms of biological role, this enzyme is involved in nucleotide metabolism: it produces dUMP, the immediate precursor of thymidine nucleotides and it decreases the intracellular concentration of dUTP so that uracil cannot be incorporated into DNA. This Burkholderia ambifaria (strain MC40-6) protein is Deoxyuridine 5'-triphosphate nucleotidohydrolase.